The sequence spans 39 residues: Cytochrome b6-f complex subunit 5 (39 aa).

The helical transmembrane segment at 5–25 (LLCGIVLGLVPITLLGLFVSA) threads the bilayer.

It belongs to the PetG family. As to quaternary structure, the 4 large subunits of the cytochrome b6-f complex are cytochrome b6, subunit IV (17 kDa polypeptide, PetD), cytochrome f and the Rieske protein, while the 4 small subunits are PetG, PetL, PetM and PetN. The complex functions as a dimer.

It is found in the cellular thylakoid membrane. Its function is as follows. Component of the cytochrome b6-f complex, which mediates electron transfer between photosystem II (PSII) and photosystem I (PSI), cyclic electron flow around PSI, and state transitions. PetG is required for either the stability or assembly of the cytochrome b6-f complex. The protein is Cytochrome b6-f complex subunit 5 of Prochlorococcus marinus subsp. pastoris (strain CCMP1986 / NIES-2087 / MED4).